Here is a 410-residue protein sequence, read N- to C-terminus: Transcription factor Dp-1 (410 aa).

Lysine 3 is subject to N6-acetyllysine. Serine 23 bears the Phosphoserine; by CDK2 mark. A disordered region spans residues 77-114 (VVGSPHTPNTHFVSQNQPSDPSPWSAGKRNRKGEKNGK). Residues 82–95 (HTPNTHFVSQNQPS) show a composition bias toward polar residues. Over residues 104–114 (KRNRKGEKNGK) the composition is skewed to basic residues. Residues 105 to 127 (RNRKGEKNGKGLRHFSMKVCEKV) are interaction with CEBPA. The DNA-binding element occupies 113–195 (GKGLRHFSMK…KKEIKWIGLP (83 aa)). The DEF box signature appears at 161–195 (DQKNIRRRVYDALNVLMAMNIISKEKKEIKWIGLP). Positions 204–277 (SLEVERQRRL…KKTVIDCSIS (74 aa)) are dimerization. An enhances binding of RB protein to E2F region spans residues 211–327 (RRLERIKQKQ…DLRVARSLVP (117 aa)). The segment at 214 to 246 (ERIKQKQSQLQELILQQIAFKNLVQRNRQVEQQ) is DCB1. Residues 259-315 (LPFIIVNTSKKTVIDCSISNDKFEYLFNFDNTFEIHDDIEVLKRMGMACGLESGSCS) form a DCB2 region. The interval 370–410 (GALATSSSGSQYSGSRVETPVSCVGEDDEDDEDFNENEEED) is disordered. Over residues 375-384 (SSSGSQYSGS) the composition is skewed to low complexity. Residues 394–410 (GEDDEDDEDFNENEEED) are compositionally biased toward acidic residues.

It belongs to the E2F/DP family. As to quaternary structure, component of the E2F:DP transcription factor complex. Forms heterodimers with E2F family members. The complex can interact with hypophosphorylated retinoblastoma protein RB1 and related proteins (RBL1 and RBL2) that inhibit the E2F transactivation domain. This repression involves recruitment of histone deacetylase (HDAC). During the cell cycle, from mid-to-late G1 phase, RB family members become phosphorylated, detach from the DRTF1/E2F complex to render E2F transcriptionally active. Part of the E2F6.com-1 complex in G0 phase is composed of E2F6, MGA, MAX, TFDP1, CBX3, BAT8, EUHMTASE1, RING1, RNF2, MBLR, L3MBTL2 YAF2. Component of the DREAM complex (also named LINC complex) at least composed of E2F4, E2F5, LIN9, LIN37, LIN52, LIN54, MYBL1, MYBL2, RBL1, RBL2, RBBP4, TFDP1 and TFDP2. The complex exists in quiescent cells where it represses cell cycle-dependent genes. It dissociates in S phase when LIN9, LIN37, LIN52 and LIN54 form a subcomplex that binds to MYBL2. The complex TFDP1:E2F1 interacts with CEBPA; the interaction prevents CEBPA binding to target gene promoters and represses its transcriptional activity. Ubiquitinated by the BCR(KBTBD5) complex, leading to its subsequent degradation. Post-translationally, phosphorylation by E2F1-bound cyclin A-CDK2, in the S phase, inhibits E2F-mediated DNA binding and transactivation.

Its subcellular location is the nucleus. It is found in the cytoplasm. Can stimulate E2F-dependent transcription. Binds DNA cooperatively with E2F family members through the E2 recognition site, 5'-TTTC[CG]CGC-3', found in the promoter region of a number of genes whose products are involved in cell cycle regulation or in DNA replication. The E2F1:DP complex appears to mediate both cell proliferation and apoptosis. Blocks adipocyte differentiation by repressing CEBPA binding to its target gene promoters. The protein is Transcription factor Dp-1 (TFDP1) of Bos taurus (Bovine).